The sequence spans 94 residues: Small ribosomal subunit protein uS19m (94 aa).

This sequence belongs to the universal ribosomal protein uS19 family.

The protein resides in the mitochondrion. In Petunia hybrida (Petunia), this protein is Small ribosomal subunit protein uS19m (RPS19).